The chain runs to 405 residues: Acetylornithine aminotransferase (405 aa).

Residues Gly107 to Ala108 and Phe140 each bind pyridoxal 5'-phosphate. Arg143 is a N(2)-acetyl-L-ornithine binding site. Position 225–228 (Asp225–Gln228) interacts with pyridoxal 5'-phosphate. Lys254 is subject to N6-(pyridoxal phosphate)lysine. Ser282 serves as a coordination point for N(2)-acetyl-L-ornithine. Position 283 (Thr283) interacts with pyridoxal 5'-phosphate.

Belongs to the class-III pyridoxal-phosphate-dependent aminotransferase family. ArgD subfamily. As to quaternary structure, homodimer. Requires pyridoxal 5'-phosphate as cofactor.

The protein resides in the cytoplasm. The enzyme catalyses N(2)-acetyl-L-ornithine + 2-oxoglutarate = N-acetyl-L-glutamate 5-semialdehyde + L-glutamate. The protein operates within amino-acid biosynthesis; L-arginine biosynthesis; N(2)-acetyl-L-ornithine from L-glutamate: step 4/4. The sequence is that of Acetylornithine aminotransferase from Shewanella oneidensis (strain ATCC 700550 / JCM 31522 / CIP 106686 / LMG 19005 / NCIMB 14063 / MR-1).